Consider the following 814-residue polypeptide: ATP-dependent RNA helicase dbp-7 (814 aa).

The interval G26–K102 is disordered. Basic and acidic residues-rich tracts occupy residues R28–G42 and Q69–R78. A Q motif motif is present at residues E145 to K174. The 207-residue stretch at P178–I384 folds into the Helicase ATP-binding domain. A191–T198 is a binding site for ATP. A DEAD box motif is present at residues D313–D316. Positions R422 to G622 constitute a Helicase C-terminal domain. Disordered regions lie at residues T464–I483, E662–V695, and G741–R795. Residues A467–A477 are compositionally biased toward basic and acidic residues. Acidic residues predominate over residues D779–E790.

This sequence belongs to the DEAD box helicase family. DDX31/DBP7 subfamily.

It is found in the nucleus. It localises to the nucleolus. The catalysed reaction is ATP + H2O = ADP + phosphate + H(+). Functionally, ATP-binding RNA helicase involved in the biogenesis of 60S ribosomal subunits and is required for the normal formation of 25S and 5.8S rRNAs. In Neurospora crassa (strain ATCC 24698 / 74-OR23-1A / CBS 708.71 / DSM 1257 / FGSC 987), this protein is ATP-dependent RNA helicase dbp-7 (dbp-7).